We begin with the raw amino-acid sequence, 314 residues long: Malate dehydrogenase (314 aa).

NAD(+) contacts are provided by residues 11 to 16 and Asp-35; that span reads GSGNIG. 2 residues coordinate substrate: Arg-84 and Arg-90. NAD(+)-binding positions include Asn-97 and 120–122; that span reads ITN. Positions 122 and 153 each coordinate substrate. The active-site Proton acceptor is the His-177.

It belongs to the LDH/MDH superfamily. MDH type 3 family.

It carries out the reaction (S)-malate + NAD(+) = oxaloacetate + NADH + H(+). In terms of biological role, catalyzes the reversible oxidation of malate to oxaloacetate. This chain is Malate dehydrogenase, found in Rickettsia felis (strain ATCC VR-1525 / URRWXCal2) (Rickettsia azadi).